A 292-amino-acid polypeptide reads, in one-letter code: Glutamate racemase (292 aa).

Substrate is bound by residues 28–29 and 60–61; these read DS and YG. C91 acts as the Proton donor/acceptor in catalysis. 92–93 contributes to the substrate binding site; it reads NT. C200 functions as the Proton donor/acceptor in the catalytic mechanism. 201–202 lines the substrate pocket; sequence TH.

Belongs to the aspartate/glutamate racemases family.

The catalysed reaction is L-glutamate = D-glutamate. It functions in the pathway cell wall biogenesis; peptidoglycan biosynthesis. In terms of biological role, provides the (R)-glutamate required for cell wall biosynthesis. This Trichormus variabilis (strain ATCC 29413 / PCC 7937) (Anabaena variabilis) protein is Glutamate racemase.